The primary structure comprises 189 residues: Peptidyl-tRNA hydrolase (189 aa).

Y15 is a binding site for tRNA. The active-site Proton acceptor is the H20. TRNA contacts are provided by F66, N68, and N114.

The protein belongs to the PTH family. As to quaternary structure, monomer.

The protein resides in the cytoplasm. It catalyses the reaction an N-acyl-L-alpha-aminoacyl-tRNA + H2O = an N-acyl-L-amino acid + a tRNA + H(+). Functionally, hydrolyzes ribosome-free peptidyl-tRNAs (with 1 or more amino acids incorporated), which drop off the ribosome during protein synthesis, or as a result of ribosome stalling. Catalyzes the release of premature peptidyl moieties from peptidyl-tRNA molecules trapped in stalled 50S ribosomal subunits, and thus maintains levels of free tRNAs and 50S ribosomes. The sequence is that of Peptidyl-tRNA hydrolase from Acidithiobacillus ferrooxidans (strain ATCC 23270 / DSM 14882 / CIP 104768 / NCIMB 8455) (Ferrobacillus ferrooxidans (strain ATCC 23270)).